Consider the following 147-residue polypeptide: uncharacterized protein (147 aa).

The next 2 helical transmembrane spans lie at 42–62 (WASL…SPEP) and 64–84 (LILQ…ATAF).

The protein resides in the cell membrane. This is an uncharacterized protein from Bacillus subtilis (strain 168).